A 452-amino-acid chain; its full sequence is Probable ECA polymerase (452 aa).

11 helical membrane passes run 6–26 (FSGL…LTWF), 37–57 (VFFS…TSVL), 63–83 (VGVA…CFYG), 118–138 (VILM…NGFL), 155–175 (GVAL…VYFL), 181–201 (AWLF…MIVG), 207–227 (IIIA…ISLW), 228–248 (MLAA…LKRY), 341–361 (LVVM…GLII), 378–398 (YKAA…IVLA), and 410–430 (VFFL…FWLF).

This sequence belongs to the WzyE family. As to quaternary structure, probably part of a complex composed of WzxE, WzyE and WzzE.

The protein resides in the cell inner membrane. It functions in the pathway bacterial outer membrane biogenesis; enterobacterial common antigen biosynthesis. Probably involved in the polymerization of enterobacterial common antigen (ECA) trisaccharide repeat units. This is Probable ECA polymerase from Salmonella typhi.